The following is a 488-amino-acid chain: Glutamyl-tRNA(Gln) amidotransferase subunit A (488 aa).

Residues lysine 77 and serine 152 each act as charge relay system in the active site. Residue serine 176 is the Acyl-ester intermediate of the active site.

This sequence belongs to the amidase family. GatA subfamily. In terms of assembly, heterotrimer of A, B and C subunits.

It carries out the reaction L-glutamyl-tRNA(Gln) + L-glutamine + ATP + H2O = L-glutaminyl-tRNA(Gln) + L-glutamate + ADP + phosphate + H(+). Allows the formation of correctly charged Gln-tRNA(Gln) through the transamidation of misacylated Glu-tRNA(Gln) in organisms which lack glutaminyl-tRNA synthetase. The reaction takes place in the presence of glutamine and ATP through an activated gamma-phospho-Glu-tRNA(Gln). This is Glutamyl-tRNA(Gln) amidotransferase subunit A from Streptococcus pyogenes serotype M5 (strain Manfredo).